A 517-amino-acid polypeptide reads, in one-letter code: Ribonuclease Y (517 aa).

A helical membrane pass occupies residues 4 to 24; it reads LIYIVILFVGIAAGAFFGISV. A KH domain is found at 207–267; sequence TISTVALPND…LRREVARRTI (61 aa). The region spanning 333–426 is the HD domain; the sequence is VLAHSVEVAQ…VAAADAISAA (94 aa).

This sequence belongs to the RNase Y family.

It localises to the cell membrane. Functionally, endoribonuclease that initiates mRNA decay. In Fervidobacterium nodosum (strain ATCC 35602 / DSM 5306 / Rt17-B1), this protein is Ribonuclease Y.